The primary structure comprises 606 residues: Polypeptide N-acetylgalactosaminyltransferase 9 (606 aa).

Over 1–6 (MAVARK) the chain is Cytoplasmic. Residues 7-29 (IRTLLTVNILVFVGIVLFSVYCR) form a helical; Signal-anchor for type II membrane protein membrane-spanning segment. Over 30 to 606 (LQGRSQELVR…IRNWIKHARH (577 aa)) the chain is Lumenal. The tract at residues 43-62 (GGCRPRPATPAPGSPLRSGG) is disordered. Disulfide bonds link Cys-144/Cys-375 and Cys-366/Cys-445. A catalytic subdomain A region spans residues 153-264 (LPQVSVVFIF…TGWAEPALSR (112 aa)). Residues Asp-194 and Arg-225 each coordinate substrate. Residues Asp-248, His-250, and His-380 each coordinate Mn(2+). The segment at 321-383 (PIRTPAMIGC…PCSRVAHIER (63 aa)) is catalytic subdomain B. Arg-383 and Tyr-388 together coordinate substrate. Asn-463 is a glycosylation site (N-linked (GlcNAc...) asparagine). In terms of domain architecture, Ricin B-type lectin spans 467-603 (TYGEVRNSKA…KWMIRNWIKH (137 aa)). 3 disulfide bridges follow: Cys-480-Cys-496, Cys-528-Cys-543, and Cys-570-Cys-590.

This sequence belongs to the glycosyltransferase 2 family. GalNAc-T subfamily. Mn(2+) is required as a cofactor.

The protein localises to the golgi apparatus membrane. It carries out the reaction L-seryl-[protein] + UDP-N-acetyl-alpha-D-galactosamine = a 3-O-[N-acetyl-alpha-D-galactosaminyl]-L-seryl-[protein] + UDP + H(+). It catalyses the reaction L-threonyl-[protein] + UDP-N-acetyl-alpha-D-galactosamine = a 3-O-[N-acetyl-alpha-D-galactosaminyl]-L-threonyl-[protein] + UDP + H(+). It functions in the pathway protein modification; protein glycosylation. Functionally, catalyzes the initial reaction in O-linked oligosaccharide biosynthesis, the transfer of an N-acetyl-D-galactosamine residue to a serine or threonine residue on the protein receptor. Does not glycosylate apomucin or SDC3. The protein is Polypeptide N-acetylgalactosaminyltransferase 9 (GALNT9) of Macaca fascicularis (Crab-eating macaque).